The following is a 306-amino-acid chain: Peroxisome biogenesis factor 2 (306 aa).

Over 1 to 15 the chain is Peroxisomal matrix; the sequence is MAASENNMEEINPVL. The chain crosses the membrane as a helical span at residues 16–42; the sequence is RISQLDAIELNKALEQLIWSQFSSCFQ. Residues 43 to 48 are Cytoplasmic-facing; that stretch reads GFKPGL. A helical membrane pass occupies residues 49 to 74; that stretch reads LTRFEPEIKASLCLFLWRYTIYTKNA. At 75 to 98 the chain is on the peroxisomal matrix side; that stretch reads TVGQTILNMQYKNDLAVTKKYRPL. The helical transmembrane segment at 99–125 threads the bilayer; it reads NKQQKVWFALFLVGGKWLEERSFDLFS. The Cytoplasmic portion of the chain corresponds to 126–134; it reads NHPFGASFQ. The helical transmembrane segment at 135–161 threads the bilayer; sequence RTKYFLNAISGLLKFGALLNFLIFLQQ. Residues 162-188 lie on the Peroxisomal matrix side of the membrane; it reads GKFATLTERLLGIRSVFSRPQDVRQVG. The helical transmembrane segment at 189–212 threads the bilayer; the sequence is FEYMNREILWHGFAEFLIFLLPLI. Over 213–306 the chain is Cytoplasmic; it reads NTQKLKSKLF…KIEISEVHTL (94 aa). 8 residues coordinate Zn(2+): C245, C248, C260, H262, C265, C268, C281, and C284. The RING-type zinc finger occupies 245–285; sequence CCLCGEWPAMPHTIGCSHVFCYYCIKSNYMSDMYFTCPKCS.

This sequence belongs to the pex2/pex10/pex12 family. In terms of assembly, component of the PEX2-PEX10-PEX12 retrotranslocation channel.

It is found in the peroxisome membrane. It catalyses the reaction [E2 ubiquitin-conjugating enzyme]-S-ubiquitinyl-L-cysteine + [acceptor protein]-L-cysteine = [E2 ubiquitin-conjugating enzyme]-L-cysteine + [acceptor protein]-S-ubiquitinyl-L-cysteine.. It carries out the reaction S-ubiquitinyl-[E2 ubiquitin-conjugating enzyme]-L-cysteine + [acceptor protein]-L-lysine = [E2 ubiquitin-conjugating enzyme]-L-cysteine + N(6)-ubiquitinyl-[acceptor protein]-L-lysine.. Its pathway is protein modification; protein ubiquitination. Functionally, E3 ubiquitin-protein ligase component of a retrotranslocation channel required for peroxisome organization by mediating export of the PEX5 receptor from peroxisomes to the cytosol, thereby promoting PEX5 recycling. The retrotranslocation channel is composed of PEX2, PEX10 and PEX12; each subunit contributing transmembrane segments that coassemble into an open channel that specifically allows the passage of PEX5 through the peroxisomal membrane. PEX2 also regulates peroxisome organization by acting as a E3 ubiquitin-protein ligase. This Xenopus laevis (African clawed frog) protein is Peroxisome biogenesis factor 2.